Here is a 474-residue protein sequence, read N- to C-terminus: 3-isopropylmalate dehydratase large subunit (474 aa).

Cysteine 353, cysteine 414, and cysteine 417 together coordinate [4Fe-4S] cluster.

It belongs to the aconitase/IPM isomerase family. LeuC type 1 subfamily. As to quaternary structure, heterodimer of LeuC and LeuD. Requires [4Fe-4S] cluster as cofactor.

The catalysed reaction is (2R,3S)-3-isopropylmalate = (2S)-2-isopropylmalate. Its pathway is amino-acid biosynthesis; L-leucine biosynthesis; L-leucine from 3-methyl-2-oxobutanoate: step 2/4. Catalyzes the isomerization between 2-isopropylmalate and 3-isopropylmalate, via the formation of 2-isopropylmaleate. This chain is 3-isopropylmalate dehydratase large subunit, found in Xylella fastidiosa (strain M23).